Here is a 302-residue protein sequence, read N- to C-terminus: Uroporphyrinogen-III synthase, chloroplastic (302 aa).

A disordered region spans residues 1–39 (MALSSSSHLLPFSRPPATFPRARHAGGGRGRAGATGRFI). The transit peptide at 1–50 (MALSSSSHLLPFSRPPATFPRARHAGGGRGRAGATGRFIACSSPPPPDVV) directs the protein to the chloroplast.

It belongs to the uroporphyrinogen-III synthase family.

It localises to the plastid. The protein resides in the chloroplast. It carries out the reaction hydroxymethylbilane = uroporphyrinogen III + H2O. Its pathway is porphyrin-containing compound metabolism; protoporphyrin-IX biosynthesis; coproporphyrinogen-III from 5-aminolevulinate: step 3/4. Its function is as follows. Catalyzes cyclization of the linear tetrapyrrole, hydroxymethylbilane, to the macrocyclic uroporphyrinogen III, a precursor of tetrapyrroles such as chlorophyll, heme and phycobilins. In Oryza sativa subsp. japonica (Rice), this protein is Uroporphyrinogen-III synthase, chloroplastic (UROS).